Here is a 251-residue protein sequence, read N- to C-terminus: Large ribosomal subunit protein uL3 (251 aa).

Gln-151 is subject to N5-methylglutamine. The disordered stretch occupies residues 214-251 (KDAPFPAGLKSAANSNSAPTETPAEEVAAPEATEGQEG). The span at 231–251 (APTETPAEEVAAPEATEGQEG) shows a compositional bias: low complexity.

The protein belongs to the universal ribosomal protein uL3 family. Part of the 50S ribosomal subunit. Forms a cluster with proteins L14 and L19. Methylated by PrmB.

Functionally, one of the primary rRNA binding proteins, it binds directly near the 3'-end of the 23S rRNA, where it nucleates assembly of the 50S subunit. This chain is Large ribosomal subunit protein uL3, found in Rhizorhabdus wittichii (strain DSM 6014 / CCUG 31198 / JCM 15750 / NBRC 105917 / EY 4224 / RW1) (Sphingomonas wittichii).